Reading from the N-terminus, the 681-residue chain is Structure-specific endonuclease subunit SLX4 (681 aa).

Disordered regions lie at residues Glu-239–Leu-305 and Glu-505–Leu-528. The segment covering Ser-251–Leu-261 has biased composition (polar residues). The segment covering Ile-265–Asn-281 has biased composition (acidic residues). Polar residues-rich tracts occupy residues Gln-288–Leu-305 and Gln-518–Leu-528.

Belongs to the SLX4 family. In terms of assembly, forms a heterodimer with SLX1. In terms of processing, phosphorylated in response to DNA damage.

It localises to the nucleus. In terms of biological role, regulatory subunit of the SLX1-SLX4 structure-specific endonuclease that resolves DNA secondary structures generated during DNA repair and recombination. Has endonuclease activity towards branched DNA substrates, introducing single-strand cuts in duplex DNA close to junctions with ss-DNA. This Meyerozyma guilliermondii (strain ATCC 6260 / CBS 566 / DSM 6381 / JCM 1539 / NBRC 10279 / NRRL Y-324) (Yeast) protein is Structure-specific endonuclease subunit SLX4.